A 362-amino-acid polypeptide reads, in one-letter code: UDP-N-acetylglucosamine--N-acetylmuramyl-(pentapeptide) pyrophosphoryl-undecaprenol N-acetylglucosamine transferase (362 aa).

UDP-N-acetyl-alpha-D-glucosamine contacts are provided by residues 15–17 (TGG), Asn127, Arg165, Ser191, Ile247, 266–271 (ALTVSE), and Gln292.

It belongs to the glycosyltransferase 28 family. MurG subfamily.

The protein resides in the cell inner membrane. The enzyme catalyses di-trans,octa-cis-undecaprenyl diphospho-N-acetyl-alpha-D-muramoyl-L-alanyl-D-glutamyl-meso-2,6-diaminopimeloyl-D-alanyl-D-alanine + UDP-N-acetyl-alpha-D-glucosamine = di-trans,octa-cis-undecaprenyl diphospho-[N-acetyl-alpha-D-glucosaminyl-(1-&gt;4)]-N-acetyl-alpha-D-muramoyl-L-alanyl-D-glutamyl-meso-2,6-diaminopimeloyl-D-alanyl-D-alanine + UDP + H(+). The protein operates within cell wall biogenesis; peptidoglycan biosynthesis. Its function is as follows. Cell wall formation. Catalyzes the transfer of a GlcNAc subunit on undecaprenyl-pyrophosphoryl-MurNAc-pentapeptide (lipid intermediate I) to form undecaprenyl-pyrophosphoryl-MurNAc-(pentapeptide)GlcNAc (lipid intermediate II). The polypeptide is UDP-N-acetylglucosamine--N-acetylmuramyl-(pentapeptide) pyrophosphoryl-undecaprenol N-acetylglucosamine transferase (Shewanella sp. (strain ANA-3)).